Reading from the N-terminus, the 361-residue chain is Chorismate synthase (361 aa).

Residues arginine 48 and arginine 54 each coordinate NADP(+). FMN contacts are provided by residues 125–127 (RSS), 238–239 (NA), glycine 278, 293–297 (KPTSS), and arginine 319.

The protein belongs to the chorismate synthase family. Homotetramer. It depends on FMNH2 as a cofactor.

The catalysed reaction is 5-O-(1-carboxyvinyl)-3-phosphoshikimate = chorismate + phosphate. Its pathway is metabolic intermediate biosynthesis; chorismate biosynthesis; chorismate from D-erythrose 4-phosphate and phosphoenolpyruvate: step 7/7. Catalyzes the anti-1,4-elimination of the C-3 phosphate and the C-6 proR hydrogen from 5-enolpyruvylshikimate-3-phosphate (EPSP) to yield chorismate, which is the branch point compound that serves as the starting substrate for the three terminal pathways of aromatic amino acid biosynthesis. This reaction introduces a second double bond into the aromatic ring system. This is Chorismate synthase from Cronobacter sakazakii (strain ATCC BAA-894) (Enterobacter sakazakii).